A 100-amino-acid chain; its full sequence is Apolipoprotein C-II (100 aa).

An N-terminal signal peptide occupies residues 1–22 (MSSQFLLAFFLVLLVLGYEVQG). Residues 66-74 (SVDEKLRDM) form a lipid binding region. Residues 78-100 (SSAAMSTYAGIFTDQLFTLLKGE) are lipoprotein lipase cofactor.

This sequence belongs to the apolipoprotein C2 family. Post-translationally, proapolipoprotein C-II is synthesized as a sialic acid containing glycoprotein which is subsequently desialylated prior to its proteolytic processing. Proapolipoprotein C-II, the major form found in plasma undergoes proteolytic cleavage of its N-terminal hexapeptide to generate the mature form apolipoprotein C-II, which occurs as the minor form in plasma.

The protein localises to the secreted. Functionally, component of chylomicrons, very low-density lipoproteins (VLDL), low-density lipoproteins (LDL), and high-density lipoproteins (HDL) in plasma. Plays an important role in lipoprotein metabolism as an activator of lipoprotein lipase. The protein is Apolipoprotein C-II (APOC2) of Cricetulus griseus (Chinese hamster).